A 427-amino-acid chain; its full sequence is UPF0597 protein CD630_32320 (427 aa).

The protein belongs to the UPF0597 family.

In Clostridioides difficile (strain 630) (Peptoclostridium difficile), this protein is UPF0597 protein CD630_32320.